The primary structure comprises 397 residues: Methylthioribose kinase (397 aa).

Residues Asn-43, Lys-60, and 114–116 contribute to the ATP site; that span reads EDL. Residue Asp-232 coordinates substrate. 249–251 is an ATP binding site; the sequence is DPE. Arg-340 serves as a coordination point for substrate.

Belongs to the methylthioribose kinase family. In terms of assembly, homodimer.

The enzyme catalyses 5-(methylsulfanyl)-D-ribose + ATP = 5-(methylsulfanyl)-alpha-D-ribose 1-phosphate + ADP + H(+). It participates in amino-acid biosynthesis; L-methionine biosynthesis via salvage pathway; S-methyl-5-thio-alpha-D-ribose 1-phosphate from S-methyl-5'-thioadenosine (hydrolase route): step 2/2. In terms of biological role, catalyzes the phosphorylation of methylthioribose into methylthioribose-1-phosphate. The chain is Methylthioribose kinase from Bacillus pumilus (strain SAFR-032).